A 479-amino-acid chain; its full sequence is Putative L-cysteine desulfhydrase 2 (479 aa).

Residues 1–36 (MASLQSGGDAAANGVDADVDGAASPPSAKRPRAGAG) form a disordered region. A compositionally biased stretch (low complexity) spans 7–36 (GGDAAANGVDADVDGAASPPSAKRPRAGAG). Lys270 bears the N6-(pyridoxal phosphate)lysine mark.

It belongs to the class-V pyridoxal-phosphate-dependent aminotransferase family. Pyridoxal 5'-phosphate is required as a cofactor.

It carries out the reaction L-cysteine + H2O = hydrogen sulfide + pyruvate + NH4(+) + H(+). Functionally, catalyzes the production of hydrogen sulfide (H2S) from cysteine. The sequence is that of Putative L-cysteine desulfhydrase 2 from Oryza sativa subsp. japonica (Rice).